A 244-amino-acid polypeptide reads, in one-letter code: UDP-2,3-diacylglucosamine hydrolase (244 aa).

Mn(2+) is bound by residues D8, H10, D41, N79, and H114. N79–R80 contributes to the substrate binding site. Positions 122, 164, 167, and 195 each coordinate substrate. Mn(2+) contacts are provided by H195 and H197.

This sequence belongs to the LpxH family. The cofactor is Mn(2+).

The protein resides in the cell inner membrane. It catalyses the reaction UDP-2-N,3-O-bis[(3R)-3-hydroxytetradecanoyl]-alpha-D-glucosamine + H2O = 2-N,3-O-bis[(3R)-3-hydroxytetradecanoyl]-alpha-D-glucosaminyl 1-phosphate + UMP + 2 H(+). Its pathway is glycolipid biosynthesis; lipid IV(A) biosynthesis; lipid IV(A) from (3R)-3-hydroxytetradecanoyl-[acyl-carrier-protein] and UDP-N-acetyl-alpha-D-glucosamine: step 4/6. In terms of biological role, hydrolyzes the pyrophosphate bond of UDP-2,3-diacylglucosamine to yield 2,3-diacylglucosamine 1-phosphate (lipid X) and UMP by catalyzing the attack of water at the alpha-P atom. Involved in the biosynthesis of lipid A, a phosphorylated glycolipid that anchors the lipopolysaccharide to the outer membrane of the cell. This chain is UDP-2,3-diacylglucosamine hydrolase, found in Vibrio atlanticus (strain LGP32) (Vibrio splendidus (strain Mel32)).